We begin with the raw amino-acid sequence, 577 residues long: Proline--tRNA ligase (577 aa).

This sequence belongs to the class-II aminoacyl-tRNA synthetase family. ProS type 1 subfamily. Homodimer.

The protein localises to the cytoplasm. The catalysed reaction is tRNA(Pro) + L-proline + ATP = L-prolyl-tRNA(Pro) + AMP + diphosphate. Functionally, catalyzes the attachment of proline to tRNA(Pro) in a two-step reaction: proline is first activated by ATP to form Pro-AMP and then transferred to the acceptor end of tRNA(Pro). As ProRS can inadvertently accommodate and process non-cognate amino acids such as alanine and cysteine, to avoid such errors it has two additional distinct editing activities against alanine. One activity is designated as 'pretransfer' editing and involves the tRNA(Pro)-independent hydrolysis of activated Ala-AMP. The other activity is designated 'posttransfer' editing and involves deacylation of mischarged Ala-tRNA(Pro). The misacylated Cys-tRNA(Pro) is not edited by ProRS. This chain is Proline--tRNA ligase, found in Chlamydia abortus (strain DSM 27085 / S26/3) (Chlamydophila abortus).